Reading from the N-terminus, the 282-residue chain is Homeobox protein CDX-4 (282 aa).

2 disordered regions span residues methionine 13–glycine 36 and methionine 98–alanine 156. Over residues serine 20–valine 29 the composition is skewed to low complexity. 2 stretches are compositionally biased toward polar residues: residues aspartate 110 to glycine 124 and serine 133 to serine 148. Positions lysine 171–isoleucine 230 form a DNA-binding region, homeobox.

Belongs to the Caudal homeobox family.

It localises to the nucleus. The polypeptide is Homeobox protein CDX-4 (Cdx4) (Mus musculus (Mouse)).